Reading from the N-terminus, the 387-residue chain is G-protein coupled receptor homolog R33 (387 aa).

The Extracellular portion of the chain corresponds to 1-33 (MDVLLGTEELEDELHQLHFNYTCVPSLGLSVAR). N20 is a glycosylation site (N-linked (GlcNAc...) asparagine; by host). The helical transmembrane segment at 34 to 61 (DAETAVNFLIVLVGGPMNFLVLATQMLS) threads the bilayer. Topologically, residues 62–71 (NRSYSVSTPT) are cytoplasmic. A helical transmembrane segment spans residues 72 to 94 (LYMTNLYLANLLTVATLPFLMLS). The Extracellular portion of the chain corresponds to 95–107 (NRGLVGSSPEGCK). Residues 108-129 (IAALAYYATCTAGFATLMLIAI) traverse the membrane as a helical segment. The Cytoplasmic segment spans residues 130–150 (NRYRVIHQRTRSGAGSKRQTY). The helical transmembrane segment at 151–169 (AVLAVTWLASLMCASPAPL) threads the bilayer. The Extracellular portion of the chain corresponds to 170–204 (YATVMAHDSADALAFETCIIYFSYDQVKTVLATFK). A helical membrane pass occupies residues 205-224 (ILITMIWGITPVVMMSWFYV). At 225–244 (FFYRRLKLTSYRRRSQTLTF) the chain is on the cytoplasmic side. The helical transmembrane segment at 245–268 (VTTLMLSFLVVQTPFVAIMSYDSY) threads the bilayer. Residues 269-285 (GVLNWPINCDTINKRDA) lie on the Extracellular side of the membrane. A helical transmembrane segment spans residues 286 to 309 (VSMLARVVPNFHCLLNPVLYAFLG). Topologically, residues 310–387 (RDFNKRFILC…PPPPPPPPNC (78 aa)) are cytoplasmic. The disordered stretch occupies residues 368-387 (RLRALGRPPPPPPPPPPPNC). Positions 374–387 (RPPPPPPPPPPPNC) are enriched in pro residues.

Belongs to the G-protein coupled receptor 1 family.

It is found in the host cell membrane. Its function is as follows. Plays an important role in vivo, in particular in the dissemination to or replication in the salivary gland. This Rattus protein is G-protein coupled receptor homolog R33.